Reading from the N-terminus, the 319-residue chain is 2,3,4,5-tetrahydropyridine-2,6-dicarboxylate N-succinyltransferase (319 aa).

Asp-167 and Glu-184 together coordinate Mg(2+). Glu-200 functions as the Acyl-anhydride intermediate in the catalytic mechanism. Succinyl-CoA-binding positions include Arg-202, Gly-217, Ser-220, Ala-243, 258–259 (EA), and Lys-278.

Belongs to the type 2 tetrahydrodipicolinate N-succinyltransferase family. In terms of assembly, homotrimer.

Its subcellular location is the cytoplasm. It catalyses the reaction (S)-2,3,4,5-tetrahydrodipicolinate + succinyl-CoA + H2O = (S)-2-succinylamino-6-oxoheptanedioate + CoA. The protein operates within amino-acid biosynthesis; L-lysine biosynthesis via DAP pathway; LL-2,6-diaminopimelate from (S)-tetrahydrodipicolinate (succinylase route): step 1/3. In terms of biological role, catalyzes the conversion of the cyclic tetrahydrodipicolinate (THDP) into the acyclic N-succinyl-L-2-amino-6-oxopimelate using succinyl-CoA. The sequence is that of 2,3,4,5-tetrahydropyridine-2,6-dicarboxylate N-succinyltransferase from Salinispora tropica (strain ATCC BAA-916 / DSM 44818 / JCM 13857 / NBRC 105044 / CNB-440).